Consider the following 95-residue polypeptide: Large ribosomal subunit protein uL23 (95 aa).

The protein belongs to the universal ribosomal protein uL23 family. In terms of assembly, part of the 50S ribosomal subunit. Contacts protein L29, and trigger factor when it is bound to the ribosome.

Functionally, one of the early assembly proteins it binds 23S rRNA. One of the proteins that surrounds the polypeptide exit tunnel on the outside of the ribosome. Forms the main docking site for trigger factor binding to the ribosome. The protein is Large ribosomal subunit protein uL23 of Desulfatibacillum aliphaticivorans.